The chain runs to 433 residues: Enolase (433 aa).

The segment at 37-59 (RAAVPSGASTGEHEAVELRDGDK) is disordered. Basic and acidic residues predominate over residues 47 to 59 (GEHEAVELRDGDK). Residue Gln-166 coordinates (2R)-2-phosphoglycerate. The Proton donor role is filled by Glu-208. Residues Asp-245, Glu-291, and Asp-318 each contribute to the Mg(2+) site. Residues Lys-343, Arg-372, Ser-373, and Lys-394 each contribute to the (2R)-2-phosphoglycerate site. Lys-343 (proton acceptor) is an active-site residue.

This sequence belongs to the enolase family. Mg(2+) serves as cofactor.

The protein localises to the cytoplasm. The protein resides in the secreted. It is found in the cell surface. It carries out the reaction (2R)-2-phosphoglycerate = phosphoenolpyruvate + H2O. It functions in the pathway carbohydrate degradation; glycolysis; pyruvate from D-glyceraldehyde 3-phosphate: step 4/5. In terms of biological role, catalyzes the reversible conversion of 2-phosphoglycerate (2-PG) into phosphoenolpyruvate (PEP). It is essential for the degradation of carbohydrates via glycolysis. The polypeptide is Enolase (Leptospira biflexa serovar Patoc (strain Patoc 1 / Ames)).